Reading from the N-terminus, the 487-residue chain is Probable cobyric acid synthase (487 aa).

One can recognise a GATase cobBQ-type domain in the interval 246–431; sequence LVRIAVIRLP…LHGLFMVPAA (186 aa). The active-site Nucleophile is Cys325. Residue His423 is part of the active site.

It belongs to the CobB/CobQ family. CobQ subfamily.

It functions in the pathway cofactor biosynthesis; adenosylcobalamin biosynthesis. Catalyzes amidations at positions B, D, E, and G on adenosylcobyrinic A,C-diamide. NH(2) groups are provided by glutamine, and one molecule of ATP is hydrogenolyzed for each amidation. The protein is Probable cobyric acid synthase of Methanosphaerula palustris (strain ATCC BAA-1556 / DSM 19958 / E1-9c).